The primary structure comprises 192 residues: Iron sulfur cluster assembly protein 1, mitochondrial (192 aa).

A mitochondrion-targeting transit peptide spans 1–53; that stretch reads MSVFRRSVQCVGVLPSILAQRSSLLARPANLQFLKTNSSKFVPQVTANVSRRM.

It belongs to the NifU family. In terms of assembly, homodimer. Component of the core Fe-S cluster (ISC) assembly machinery. [2Fe-2S] cluster serves as cofactor.

It localises to the mitochondrion. It is found in the mitochondrion matrix. It participates in cofactor biosynthesis; iron-sulfur cluster biosynthesis. Functionally, scaffold protein for the de novo synthesis of iron-sulfur (Fe-S) clusters within mitochondria, which is required for maturation of both mitochondrial and cytoplasmic [2Fe-2S] and [4Fe-4S] proteins. First, a [2Fe-2S] cluster is transiently assembled on the scaffold protein isu1. In a second step, the cluster is released from isu1, transferred to a glutaredoxin, followed by the formation of mitochondrial [2Fe-2S] proteins, the synthesis of [4Fe-4S] clusters and their target-specific insertion into the recipient apoproteins. Cluster assembly on isu1 depends on the function of the cysteine desulfurase complex nfs1-isd11, which serves as the sulfur donor for cluster synthesis, the iron-binding protein frataxin as the putative iron donor, and the electron transfer chain comprised of ferredoxin reductase and ferredoxin, which receive their electrons from NADH. This is Iron sulfur cluster assembly protein 1, mitochondrial (isu1) from Schizosaccharomyces pombe (strain 972 / ATCC 24843) (Fission yeast).